A 609-amino-acid chain; its full sequence is Cell division protein DipM (609 aa).

Positions 1-24 (MRQLWTQAAVIALTAGTLGAPAHA) are cleaved as a signal peptide. The tract at residues 21-103 (PAHASGQSGQ…PVLRATPPRT (83 aa)) is disordered. Residues 25–38 (SGQSGQRFTPNFPI) show a composition bias toward polar residues. A compositionally biased stretch (pro residues) spans 79–93 (LPPPAPVSTPAPAPQ). LysM domains follow at residues 121 to 165 (QVRV…KIKG) and 171 to 215 (KAYV…KLLL). Composition is skewed to low complexity over residues 242 to 258 (AEPA…AATP) and 265 to 280 (PVSE…STTT). The tract at residues 242 to 280 (AEPAPATTRPATPAATPSRPVRQPVSEETSEPATTSTTT) is disordered. LysM domains are found at residues 295–339 (QVHT…KIKG) and 345–389 (KAYS…KIAL). Residues 389–457 (LPDGFRDKGP…AAQPITPPPS (69 aa)) form a disordered region. Residues 400–429 (RTTTTTRPATPPANTYARVDSSAAAASTPS) are compositionally biased toward low complexity. The tract at residues 503 to 603 (NDGLNIRAPQ…VKDKAKPVDP (101 aa)) is lytM.

The protein localises to the periplasm. Functionally, required for efficient cell division, cell polarity and normal cell morphology. Facilitates remodeling of the peptidoglycan layer and, thus, coordinated constriction of the cell envelope during the division process. Plays a critical role in maintaining proper cell envelope architecture during growth and division. Required for normal envelope invagination during cell division and to establish or maintain outer membrane connections throughout the cell envelope. May serve as a regulatory hub coordinating the activities of multiple peptidoglycan-degrading enzymes during cell constriction. Required to position SdpA and SdpB at midcell. This chain is Cell division protein DipM, found in Caulobacter vibrioides (strain NA1000 / CB15N) (Caulobacter crescentus).